Reading from the N-terminus, the 492-residue chain is Protein nucleotidyltransferase YdiU (492 aa).

The ATP site is built by Gly88, Gly90, Arg91, Lys111, Asp123, Gly124, Arg174, and Arg181. Catalysis depends on Asp250, which acts as the Proton acceptor. Residues Asn251 and Asp260 each coordinate Mg(2+). Asp260 contacts ATP.

This sequence belongs to the SELO family. Requires Mg(2+) as cofactor. Mn(2+) is required as a cofactor.

It catalyses the reaction L-seryl-[protein] + ATP = 3-O-(5'-adenylyl)-L-seryl-[protein] + diphosphate. The enzyme catalyses L-threonyl-[protein] + ATP = 3-O-(5'-adenylyl)-L-threonyl-[protein] + diphosphate. The catalysed reaction is L-tyrosyl-[protein] + ATP = O-(5'-adenylyl)-L-tyrosyl-[protein] + diphosphate. It carries out the reaction L-histidyl-[protein] + UTP = N(tele)-(5'-uridylyl)-L-histidyl-[protein] + diphosphate. It catalyses the reaction L-seryl-[protein] + UTP = O-(5'-uridylyl)-L-seryl-[protein] + diphosphate. The enzyme catalyses L-tyrosyl-[protein] + UTP = O-(5'-uridylyl)-L-tyrosyl-[protein] + diphosphate. Functionally, nucleotidyltransferase involved in the post-translational modification of proteins. It can catalyze the addition of adenosine monophosphate (AMP) or uridine monophosphate (UMP) to a protein, resulting in modifications known as AMPylation and UMPylation. This chain is Protein nucleotidyltransferase YdiU, found in Rhodopseudomonas palustris (strain BisB5).